The sequence spans 1065 residues: Carbamoyl phosphate synthase large chain (1065 aa).

Positions 1 to 401 (MPKRRDIETI…SLLKAVRSLE (401 aa)) are carboxyphosphate synthetic domain. The ATP site is built by R129, R169, G175, G176, R208, I210, E215, G241, I242, H243, Q284, and E298. Positions 133-327 (RALMNELGEP…IAKLAAKIAV (195 aa)) constitute an ATP-grasp 1 domain. 3 residues coordinate Mg(2+): Q284, E298, and N300. Mn(2+) is bound by residues Q284, E298, and N300. Residues 402-546 (IGVHHLELNE…YSTYEEENES (145 aa)) are oligomerization domain. A carbamoyl phosphate synthetic domain region spans residues 547-929 (IVTEKPSVIV…ALYKGLVASG (383 aa)). Positions 671 to 861 (EQALSELGIP…MANLATKAIL (191 aa)) constitute an ATP-grasp 2 domain. Positions 707, 746, 748, 752, 777, 778, 779, 780, 820, and 832 each coordinate ATP. Mg(2+) contacts are provided by Q820, E832, and N834. Residues Q820, E832, and N834 each contribute to the Mn(2+) site. One can recognise an MGS-like domain in the interval 930–1065 (IHIQPHGAVL…TAMTEGLVRS (136 aa)). The tract at residues 930–1065 (IHIQPHGAVL…TAMTEGLVRS (136 aa)) is allosteric domain.

It belongs to the CarB family. In terms of assembly, composed of two chains; the small (or glutamine) chain promotes the hydrolysis of glutamine to ammonia, which is used by the large (or ammonia) chain to synthesize carbamoyl phosphate. Tetramer of heterodimers (alpha,beta)4. Mg(2+) serves as cofactor. Mn(2+) is required as a cofactor.

The enzyme catalyses hydrogencarbonate + L-glutamine + 2 ATP + H2O = carbamoyl phosphate + L-glutamate + 2 ADP + phosphate + 2 H(+). The catalysed reaction is hydrogencarbonate + NH4(+) + 2 ATP = carbamoyl phosphate + 2 ADP + phosphate + 2 H(+). Its pathway is amino-acid biosynthesis; L-arginine biosynthesis; carbamoyl phosphate from bicarbonate: step 1/1. It participates in pyrimidine metabolism; UMP biosynthesis via de novo pathway; (S)-dihydroorotate from bicarbonate: step 1/3. Its function is as follows. Large subunit of the glutamine-dependent carbamoyl phosphate synthetase (CPSase). CPSase catalyzes the formation of carbamoyl phosphate from the ammonia moiety of glutamine, carbonate, and phosphate donated by ATP, constituting the first step of 2 biosynthetic pathways, one leading to arginine and/or urea and the other to pyrimidine nucleotides. The large subunit (synthetase) binds the substrates ammonia (free or transferred from glutamine from the small subunit), hydrogencarbonate and ATP and carries out an ATP-coupled ligase reaction, activating hydrogencarbonate by forming carboxy phosphate which reacts with ammonia to form carbamoyl phosphate. This Bacillus caldolyticus protein is Carbamoyl phosphate synthase large chain.